We begin with the raw amino-acid sequence, 219 residues long: Orotate phosphoribosyltransferase (219 aa).

K26 lines the 5-phospho-alpha-D-ribose 1-diphosphate pocket. F34–F35 contacts orotate. 5-phospho-alpha-D-ribose 1-diphosphate is bound by residues Y72 to K73, R98, K99, K102, H104, and D124 to A132. The orotate site is built by T128 and R156.

It belongs to the purine/pyrimidine phosphoribosyltransferase family. PyrE subfamily. In terms of assembly, homodimer. Mg(2+) is required as a cofactor.

The catalysed reaction is orotidine 5'-phosphate + diphosphate = orotate + 5-phospho-alpha-D-ribose 1-diphosphate. The protein operates within pyrimidine metabolism; UMP biosynthesis via de novo pathway; UMP from orotate: step 1/2. In terms of biological role, catalyzes the transfer of a ribosyl phosphate group from 5-phosphoribose 1-diphosphate to orotate, leading to the formation of orotidine monophosphate (OMP). The chain is Orotate phosphoribosyltransferase from Xylella fastidiosa (strain M23).